The chain runs to 404 residues: Cysteine desulfurase IscS (404 aa).

Residues 75–76 (AT), Asn-155, Gln-183, and 203–205 (SAH) contribute to the pyridoxal 5'-phosphate site. Lys-206 is modified (N6-(pyridoxal phosphate)lysine). Thr-243 is a pyridoxal 5'-phosphate binding site. Cys-328 (cysteine persulfide intermediate) is an active-site residue. Position 328 (Cys-328) interacts with [2Fe-2S] cluster.

The protein belongs to the class-V pyridoxal-phosphate-dependent aminotransferase family. NifS/IscS subfamily. As to quaternary structure, homodimer. Forms a heterotetramer with IscU, interacts with other sulfur acceptors. It depends on pyridoxal 5'-phosphate as a cofactor.

It is found in the cytoplasm. The enzyme catalyses (sulfur carrier)-H + L-cysteine = (sulfur carrier)-SH + L-alanine. Its pathway is cofactor biosynthesis; iron-sulfur cluster biosynthesis. Functionally, master enzyme that delivers sulfur to a number of partners involved in Fe-S cluster assembly, tRNA modification or cofactor biosynthesis. Catalyzes the removal of elemental sulfur atoms from cysteine to produce alanine. Functions as a sulfur delivery protein for Fe-S cluster synthesis onto IscU, an Fe-S scaffold assembly protein, as well as other S acceptor proteins. This Shewanella sediminis (strain HAW-EB3) protein is Cysteine desulfurase IscS.